The primary structure comprises 616 residues: Protein translocase subunit SecD (616 aa).

6 helical membrane passes run 11-31, 453-473, 475-495, 497-517, 547-569, and 585-605; these read LMVIFIVAIGILYSLPNIYGE, QGINASLWGLVAVIAFMLFYY, MFGVIASFALVINIVLLVGLM, ILPGATLSMPGIAGIVLTLGM, YNGAFTSIFDANLTTILTAIILY, and LGVAISMFTAITGTRALVNAL.

Belongs to the SecD/SecF family. SecD subfamily. As to quaternary structure, forms a complex with SecF. Part of the essential Sec protein translocation apparatus which comprises SecA, SecYEG and auxiliary proteins SecDF-YajC and YidC.

The protein localises to the cell inner membrane. In terms of biological role, part of the Sec protein translocase complex. Interacts with the SecYEG preprotein conducting channel. SecDF uses the proton motive force (PMF) to complete protein translocation after the ATP-dependent function of SecA. In Haemophilus influenzae (strain ATCC 51907 / DSM 11121 / KW20 / Rd), this protein is Protein translocase subunit SecD.